Consider the following 306-residue polypeptide: UDP-N-acetylenolpyruvoylglucosamine reductase (306 aa).

The FAD-binding PCMH-type domain occupies 28–193 (KVGGPADFLA…VSAKFSLKPG (166 aa)). Residue R172 is part of the active site. The active-site Proton donor is the S222. E292 is a catalytic residue.

Belongs to the MurB family. Requires FAD as cofactor.

The protein localises to the cytoplasm. The catalysed reaction is UDP-N-acetyl-alpha-D-muramate + NADP(+) = UDP-N-acetyl-3-O-(1-carboxyvinyl)-alpha-D-glucosamine + NADPH + H(+). The protein operates within cell wall biogenesis; peptidoglycan biosynthesis. Cell wall formation. This is UDP-N-acetylenolpyruvoylglucosamine reductase from Streptococcus mutans serotype c (strain ATCC 700610 / UA159).